The primary structure comprises 601 residues: Terpenoid synthase 17 (601 aa).

The Mg(2+) site is built by asparagine 354, aspartate 358, asparagine 497, threonine 501, and glutamate 505. Positions 354-358 match the DDXXD motif; degenerate motif; that stretch reads NDTCD.

The protein belongs to the terpene synthase family. Tpsa subfamily. Requires Mg(2+) as cofactor. The cofactor is Mn(2+). In terms of tissue distribution, expressed exclusively in flowers.

Its subcellular location is the cytoplasm. It participates in secondary metabolite biosynthesis; terpenoid biosynthesis. The sequence is that of Terpenoid synthase 17 (TPS17) from Arabidopsis thaliana (Mouse-ear cress).